We begin with the raw amino-acid sequence, 126 residues long: uncharacterized protein (126 aa).

The signal sequence occupies residues 1–27; sequence MKNLFIFLSLMMMFVLTACGGSKYDDA. The interval 93 to 126 is disordered; that stretch reads MTDMPGNGENDRLGLSKKTPDYEEVKGEETELEE. The segment covering 101-126 has biased composition (basic and acidic residues); that stretch reads ENDRLGLSKKTPDYEEVKGEETELEE.

This is an uncharacterized protein from Bacillus subtilis (strain 168).